Reading from the N-terminus, the 685-residue chain is Phenoloxidase subunit 1 (685 aa).

Cu cation is bound by residues H209, H213, and H239. Catalysis depends on E351, which acts as the Proton acceptor. 3 residues coordinate Cu cation: H366, H370, and H406. 2 cysteine pairs are disulfide-bonded: C580/C622 and C582/C629.

In terms of assembly, heterodimer. Forms a complex with an interleukin 1-like protein as a consequence of a host defense response. Cu(2+) serves as cofactor. The N-terminus is blocked. In terms of tissue distribution, synthesized by oenocytoids, a type of hemocyte, and released into the hemolymph plasma.

Its subcellular location is the secreted. It carries out the reaction 2 L-dopa + O2 = 2 L-dopaquinone + 2 H2O. The catalysed reaction is L-tyrosine + O2 = L-dopaquinone + H2O. With respect to regulation, activated by immulectin and lipopolysaccharide. In terms of biological role, this is a copper-containing oxidase that functions in the formation of pigments such as melanins and other polyphenolic compounds. Catalyzes the rate-limiting conversions of tyrosine to DOPA, DOPA to DOPA-quinone and possibly 5,6 dihydroxyindole to indole-5'6 quinone. Binds to the surface of hemocytes and is involved in hemocyte melanization. This Manduca sexta (Tobacco hawkmoth) protein is Phenoloxidase subunit 1.